The primary structure comprises 338 residues: 1-aminocyclopropane-1-carboxylate deaminase (338 aa).

The residue at position 51 (lysine 51) is an N6-(pyridoxal phosphate)lysine. The Nucleophile role is filled by serine 78.

It belongs to the ACC deaminase/D-cysteine desulfhydrase family. In terms of assembly, homotrimer. Pyridoxal 5'-phosphate is required as a cofactor.

It catalyses the reaction 1-aminocyclopropane-1-carboxylate + H2O = 2-oxobutanoate + NH4(+). Functionally, catalyzes a cyclopropane ring-opening reaction, the irreversible conversion of 1-aminocyclopropane-1-carboxylate (ACC) to ammonia and alpha-ketobutyrate. Allows growth on ACC as a nitrogen source. This chain is 1-aminocyclopropane-1-carboxylate deaminase, found in Paracidovorax citrulli (strain AAC00-1) (Acidovorax citrulli).